The primary structure comprises 528 residues: Ceramide glucosyltransferase (528 aa).

Over 1 to 6 the chain is Lumenal; sequence MYSFIE. The chain crosses the membrane as a helical span at residues 7-27; it reads CIAGALFVLGCVVVTLVVIGV. Topologically, residues 28-369 are cytoplasmic; the sequence is RALLYNFRNR…TVLSATILEP (342 aa). Residue Asp94 is a short sequence motif, D1. A short sequence motif (D2) is located at residue Asp154. Residue Asp308 is a short sequence motif, D3. The active-site Proton acceptor is Asp308. Positions 349 to 353 match the (Q/R)XXRW motif; it reads RRSRW. The chain crosses the membrane as a helical span at residues 370–390; the sequence is FTECFLFATYMSLAMTTIPVL. Topologically, residues 391–402 are lumenal; it reads SQNLGIPKTWNA. Residues 403–423 form a helical membrane-spanning segment; sequence TAIAWFTITTLWMLIDYIGYL. At 424–457 the chain is on the cytoplasmic side; the sequence is RLHSGVTMEVDEHTPYFAKGFKNTGGIKRRPFLE. The chain crosses the membrane as a helical span at residues 458–478; it reads FLAAWIGREGLAFPVWAYAVV. Topologically, residues 479–528 are lumenal; that stretch reads FGNTVNWRGRLFYIHWDTTVDAVEPREERTREVRTPELERGPSRNKHRVD. The tract at residues 503–528 is disordered; the sequence is PREERTREVRTPELERGPSRNKHRVD.

This sequence belongs to the glycosyltransferase 2 family.

The protein localises to the golgi apparatus membrane. It catalyses the reaction an N-acylsphing-4-enine + UDP-alpha-D-glucose = a beta-D-glucosyl-(1&lt;-&gt;1')-N-acylsphing-4-enine + UDP + H(+). Its pathway is lipid metabolism; sphingolipid metabolism. Its function is as follows. Catalyzes the final step in the biosynthesis of the membrane lipid glucosylceramide (GluCer), the transfer of glucose to ceramide. Glucosylceramides play important roles in growth, differentiation and pathogenicity. Contribution to fungal pathogenesis is host-dependent. This chain is Ceramide glucosyltransferase, found in Gibberella zeae (strain ATCC MYA-4620 / CBS 123657 / FGSC 9075 / NRRL 31084 / PH-1) (Wheat head blight fungus).